The following is a 362-amino-acid chain: Cytochrome c oxidase subunit 2 (362 aa).

The N-terminal stretch at 1-28 (MEQQEKRGTVRKALLGSVIGFGGLALAG) is a signal peptide. C29 is lipidated: N-palmitoyl cysteine. The S-diacylglycerol cysteine moiety is linked to residue C29. 2 helical membrane-spanning segments follow: residues 60–80 (FWVW…GLFI) and 107–127 (IPLE…LFFF). The segment at 171 to 206 (SDYVGTDEKRQEAAEKTKFDQGGDNPNPINGRSKTD) is disordered. Basic and acidic residues predominate over residues 176–191 (TDEKRQEAAEKTKFDQ). Over residues 197 to 206 (NPINGRSKTD) the composition is skewed to polar residues. H246, C287, E289, C291, H295, and M298 together coordinate Cu cation. The disordered stretch occupies residues 325-362 (NSDALKSIGEAPYATSTHPFNSERATRDGANFDDTAAA).

It belongs to the cytochrome c oxidase subunit 2 family. In terms of assembly, associates with subunits I, III and IV to form cytochrome c oxidase. Requires binuclear copper center (CuA) as cofactor.

It localises to the cell membrane. It catalyses the reaction 4 Fe(II)-[cytochrome c] + O2 + 8 H(+)(in) = 4 Fe(III)-[cytochrome c] + 2 H2O + 4 H(+)(out). In terms of biological role, subunits I and II form the functional core of the enzyme complex. Electrons originating in cytochrome c are transferred via heme a and Cu(A) to the binuclear center formed by heme a3 and Cu(B). The polypeptide is Cytochrome c oxidase subunit 2 (ctaC) (Corynebacterium diphtheriae (strain ATCC 700971 / NCTC 13129 / Biotype gravis)).